The sequence spans 54 residues: Potassium channel toxin alpha-KTx 14.2 (54 aa).

An N-terminal signal peptide occupies residues 1–23; that stretch reads MKIFFAILLILAVCSMAIWTVNG. 3 disulfide bridges follow: cysteine 30–cysteine 46, cysteine 36–cysteine 51, and cysteine 40–cysteine 53.

The protein belongs to the short scorpion toxin superfamily. Potassium channel inhibitor family. Alpha-KTx 14 subfamily. As to expression, expressed by the venom gland.

The protein resides in the secreted. Inhibits potassium channels. May be active towards small conductance calcium-activated potassium channels (KCNN, SK), and less active towards voltage-gated potassium channels (Kv/KCN). This chain is Potassium channel toxin alpha-KTx 14.2, found in Olivierus martensii (Manchurian scorpion).